The following is a 52-amino-acid chain: Large ribosomal subunit protein eL39 (52 aa).

Belongs to the eukaryotic ribosomal protein eL39 family.

This chain is Large ribosomal subunit protein eL39, found in Desulfurococcus amylolyticus (strain DSM 18924 / JCM 16383 / VKM B-2413 / 1221n) (Desulfurococcus kamchatkensis).